A 531-amino-acid polypeptide reads, in one-letter code: Cytochrome P450 monooxygenase acuC (531 aa).

A helical membrane pass occupies residues 3 to 23 (PIVWLLGGAIALLVVVIRAAW). A heme-binding site is contributed by Cys447.

This sequence belongs to the cytochrome P450 family. Requires heme as cofactor.

Its subcellular location is the endoplasmic reticulum membrane. It carries out the reaction 3-methylphenol + reduced [NADPH--hemoprotein reductase] + O2 = 3-hydroxybenzyl alcohol + oxidized [NADPH--hemoprotein reductase] + H2O + H(+). It functions in the pathway secondary metabolite biosynthesis. Functionally, cytochrome P450 monooxygenase; part of the gene cluster that mediates the biosynthesis of aculins. The pathway begins with the synthesis of 6-methylsalicylic acid by the polyketide synthase (PKS) acuA via condensation of acetate and malonate units. The 6-methylsalicylic acid decarboxylase acuB then catalyzes the decarboxylation of 6-methylsalicylic acid to yield m-cresol (also known as 3-methylphenol). These first reactions occur in the cytosol. The intermediate m-cresol is then transported into the endoplasmic reticulum where the cytochrome P450 monooxygenase acuC converts it to m-hydroxybenzyl alcohol, which is further converted to gentisyl alcohol by the cytochrome P450 monooxygenase acuD. Gentisyl alcohol is further oxidized by the oxidoreductase acuE that probably catalyzes hydroxylation of the aromatic ring. The aromatic system might then be opened by oxidation through a Baeyer-Villiger type of oxidation, which could be catalyzed by acuF, with the carboxylic acid at C-1 subsequently reduced to an aldehyde by acuG. Subsequently, a hemiacetal is formed, before the dehydrogenase acuH would reduce the double bond between C-4 and C-6. Finally, keto-enol tautomerism results in formation of aculinic acid, which exists as two diastereomers (both R/S configurations at C-1) by non-enzymatic hemiacetal formation. The carboxypeptidase acuI could be involved in the linking of aculinic acid to an aculene A moiety produced by the aculene biosynthesis cluster and which leads to the production of aculin A. AcuI may also be involved in the attachment of proline to aculinic acid to form epi-aculins A and B. This Aspergillus aculeatus (strain ATCC 16872 / CBS 172.66 / WB 5094) protein is Cytochrome P450 monooxygenase acuC.